The chain runs to 445 residues: 3-phosphoshikimate 1-carboxyvinyltransferase (445 aa).

Residues Lys21, Ser22, and Arg26 each coordinate 3-phosphoshikimate. Residue Lys21 coordinates phosphoenolpyruvate. Phosphoenolpyruvate-binding residues include Gly92 and Arg120. 3-phosphoshikimate is bound by residues Ser165, Gln166, Asp307, and Lys334. Gln166 contacts phosphoenolpyruvate. The Proton acceptor role is filled by Asp307. Phosphoenolpyruvate contacts are provided by Arg338, Arg379, and Lys405.

This sequence belongs to the EPSP synthase family. As to quaternary structure, monomer.

It is found in the cytoplasm. The enzyme catalyses 3-phosphoshikimate + phosphoenolpyruvate = 5-O-(1-carboxyvinyl)-3-phosphoshikimate + phosphate. Its pathway is metabolic intermediate biosynthesis; chorismate biosynthesis; chorismate from D-erythrose 4-phosphate and phosphoenolpyruvate: step 6/7. Catalyzes the transfer of the enolpyruvyl moiety of phosphoenolpyruvate (PEP) to the 5-hydroxyl of shikimate-3-phosphate (S3P) to produce enolpyruvyl shikimate-3-phosphate and inorganic phosphate. The polypeptide is 3-phosphoshikimate 1-carboxyvinyltransferase (Chlamydia pneumoniae (Chlamydophila pneumoniae)).